The chain runs to 564 residues: MFS-type transporter astH (564 aa).

A glycan (N-linked (GlcNAc...) asparagine) is linked at Asn-23. The tract at residues 26–59 (KDTLVNCSPDPENPEKGQASSPRTQISVDDNEES) is disordered. Polar residues predominate over residues 43–53 (QASSPRTQISV). The next 4 helical transmembrane spans lie at 69–89 (LAMI…DTTI), 106–126 (DVGW…LSFG), 143–163 (GMFE…GLII), and 197–217 (GILG…GGAF). Residue Asn-220 is glycosylated (N-linked (GlcNAc...) asparagine). 6 helical membrane-spanning segments follow: residues 225 to 245 (WCFY…ILFF), 266 to 286 (LLGS…LQWG), 297 to 317 (IIAL…VQWW), 339 to 359 (LFSF…PMWF), 375 to 395 (LPMV…VGAL), and 396 to 416 (GYYT…AGLL). N-linked (GlcNAc...) asparagine glycosylation occurs at Asn-425. A run of 2 helical transmembrane segments spans residues 461-481 (TGTV…MSVG) and 537-557 (FYVA…MQWI).

It belongs to the major facilitator superfamily. TCR/Tet family.

The protein localises to the membrane. Its function is as follows. MFS-type transporter; part of the gene cluster that mediates the biosynthesis of astellolides, drimane-type sesquiterpene esters that show antimicrobial, anti-inflammatory, and anti-tumor activities. Seems not to be involved in astellolides translocation. In Aspergillus oryzae (strain ATCC 42149 / RIB 40) (Yellow koji mold), this protein is MFS-type transporter astH.